The following is a 426-amino-acid chain: Coiled-coil domain-containing protein 86 (426 aa).

The interval M1–V426 is disordered. S18 carries the post-translational modification Phosphoserine. Basic and acidic residues predominate over residues A33–S49. Residues L55–E145 show a composition bias toward pro residues. A Phosphoserine modification is found at S59. T66 is subject to Phosphothreonine. Phosphoserine is present on residues S67, S70, S161, S172, S183, S191, S194, S225, S252, S253, and S283. The span at Q241 to E255 shows a compositional bias: polar residues. Residues G304–F320 are compositionally biased toward basic residues. A compositionally biased stretch (basic and acidic residues) spans E339–E383. The stretch at A346–R389 forms a coiled coil. Residues A392–L402 are compositionally biased toward basic residues. Citrulline is present on R408.

In terms of processing, citrullinated by PADI4. Highly expressed in testis. Also expressed in heart, liver, kidney.

Its subcellular location is the nucleus. The protein localises to the chromosome. It localises to the nucleolus. Its function is as follows. Required for proper chromosome segregation during mitosis and error-free mitotic progression. The chain is Coiled-coil domain-containing protein 86 from Mus musculus (Mouse).